Reading from the N-terminus, the 163-residue chain is Lipoprotein signal peptidase (163 aa).

4 helical membrane passes run 9–29, 42–62, 67–87, and 93–113; these read AWPW…SKYL, ILPF…SFLG, WQII…ILWL, and SEIM…GNFI. Residues D123 and D141 contribute to the active site. The chain crosses the membrane as a helical span at residues 137-157; that stretch reads FNVADSAICVGVFLLIVHMLL.

It belongs to the peptidase A8 family.

The protein resides in the cell inner membrane. The catalysed reaction is Release of signal peptides from bacterial membrane prolipoproteins. Hydrolyzes -Xaa-Yaa-Zaa-|-(S,diacylglyceryl)Cys-, in which Xaa is hydrophobic (preferably Leu), and Yaa (Ala or Ser) and Zaa (Gly or Ala) have small, neutral side chains.. It functions in the pathway protein modification; lipoprotein biosynthesis (signal peptide cleavage). Functionally, this protein specifically catalyzes the removal of signal peptides from prolipoproteins. The polypeptide is Lipoprotein signal peptidase (Coxiella burnetii (strain RSA 493 / Nine Mile phase I)).